A 205-amino-acid chain; its full sequence is Outer-membrane lipoprotein carrier protein (205 aa).

The first 22 residues, 1-22 (MKKIVIVISILLTSFLSSAVSA), serve as a signal peptide directing secretion.

Belongs to the LolA family. As to quaternary structure, monomer.

It localises to the periplasm. Functionally, participates in the translocation of lipoproteins from the inner membrane to the outer membrane. Only forms a complex with a lipoprotein if the residue after the N-terminal Cys is not an aspartate (The Asp acts as a targeting signal to indicate that the lipoprotein should stay in the inner membrane). The chain is Outer-membrane lipoprotein carrier protein from Psychromonas ingrahamii (strain DSM 17664 / CCUG 51855 / 37).